A 67-amino-acid chain; its full sequence is MKSQAFFLLFLVVLLLATTQSEAFIMDLLGKIFGRRSMRNMDTMKYLYDPSLSAADLKTLQKLMENY.

The N-terminal stretch at 1 to 23 (MKSQAFFLLFLVVLLLATTQSEA) is a signal peptide. F33 bears the Phenylalanine amide mark. A propeptide spanning residues 37–67 (SMRNMDTMKYLYDPSLSAADLKTLQKLMENY) is cleaved from the precursor.

The protein belongs to the non-disulfide-bridged peptide (NDBP) superfamily. Short antimicrobial peptide (group 4) family. Expressed by the venom gland.

It localises to the secreted. The protein localises to the target cell membrane. Its function is as follows. Amphipathic peptide that has antibacterial activities. The chain is Amphipathic peptide Tx348 from Buthus israelis (Israeli scorpion).